Consider the following 441-residue polypeptide: MKEYALEIATKAKAVLPKLSSLNPAVKNSILIRVSQLLKENKELIQKENEKDIEFAKSINLSKAMIDRLKVGEKQINGMIKILEDVAKLKDPVGEITSMWTVDNGLKIGRMRVPLGVIFIIYESRPNVTIEAASLCFKSSNAVILRGGKEAIHTNKILSDLFRQAIREHVEGLEDAVCFVDKREREIVTELLQLEGLVDVAIPRGGESLIKAVSETAKISVIKHYKGVCSIYVDNEADLKKAYNIVYNAKVQRPSVCNAIENLVIHKDLLQDFWPKMAMVLLESDVELRCDEDSYEILQNKDFDSFKSKIKKATEKDYYEEFLDLILAVKTVNSLEEAMQFIEKYGSKHSDAIITENHTKAMRFLQEVDSAAVYVNASTRFTDGNEFGLGAEMGISTDKIHARGPMALRELTIEKFIIFGNGQLRENVGIPKELKEKLQID.

This sequence belongs to the gamma-glutamyl phosphate reductase family.

The protein localises to the cytoplasm. It catalyses the reaction L-glutamate 5-semialdehyde + phosphate + NADP(+) = L-glutamyl 5-phosphate + NADPH + H(+). It functions in the pathway amino-acid biosynthesis; L-proline biosynthesis; L-glutamate 5-semialdehyde from L-glutamate: step 2/2. Its function is as follows. Catalyzes the NADPH-dependent reduction of L-glutamate 5-phosphate into L-glutamate 5-semialdehyde and phosphate. The product spontaneously undergoes cyclization to form 1-pyrroline-5-carboxylate. The sequence is that of Gamma-glutamyl phosphate reductase from Hydrogenobaculum sp. (strain Y04AAS1).